A 428-amino-acid chain; its full sequence is CRS2-associated factor 1, mitochondrial (428 aa).

Residues Met1–Arg21 constitute a mitochondrion transit peptide. 2 disordered regions span residues Pro33–Lys100 and His129–Val152. CRM domains are found at residues Glu155–Val253 and Glu275–Asn371. The interval Ser378–Asp428 is disordered. Residues Leu380–Asp393 are compositionally biased toward acidic residues. Residues Gln394–Asp413 are compositionally biased toward polar residues.

As to quaternary structure, part of large ribonucleo-protein complexes that include group IIB introns.

The protein localises to the mitochondrion. Its function is as follows. May be involved in the splicing of group IIB introns in mitochondria. The protein is CRS2-associated factor 1, mitochondrial of Oryza sativa subsp. japonica (Rice).